The primary structure comprises 137 residues: Large ribosomal subunit protein uL16 (137 aa).

This sequence belongs to the universal ribosomal protein uL16 family. As to quaternary structure, part of the 50S ribosomal subunit.

In terms of biological role, binds 23S rRNA and is also seen to make contacts with the A and possibly P site tRNAs. In Anaplasma phagocytophilum (strain HZ), this protein is Large ribosomal subunit protein uL16.